The following is a 108-amino-acid chain: T cell receptor alpha variable 1-1 (108 aa).

The signal sequence occupies residues 1–18 (MWGAFLLYVSMKMGGTAG). Positions 19–108 (QSLEQPSEVT…DSASYFCAVR (90 aa)) constitute an Ig-like domain. N38 is a glycosylation site (N-linked (GlcNAc...) asparagine). The cysteines at positions 39 and 105 are disulfide-linked.

As to quaternary structure, alpha-beta TR is a heterodimer composed of an alpha and beta chain; disulfide-linked. The alpha-beta TR is associated with the transmembrane signaling CD3 coreceptor proteins to form the TR-CD3 (TcR or TCR). The assembly of alpha-beta TR heterodimers with CD3 occurs in the endoplasmic reticulum where a single alpha-beta TR heterodimer associates with one CD3D-CD3E heterodimer, one CD3G-CD3E heterodimer and one CD247 homodimer forming a stable octameric structure. CD3D-CD3E and CD3G-CD3E heterodimers preferentially associate with TR alpha and TR beta chains, respectively. The association of the CD247 homodimer is the last step of TcR assembly in the endoplasmic reticulum and is required for transport to the cell surface.

Its subcellular location is the cell membrane. Its function is as follows. V region of the variable domain of T cell receptor (TR) alpha chain that participates in the antigen recognition. Alpha-beta T cell receptors are antigen specific receptors which are essential to the immune response and are present on the cell surface of T lymphocytes. Recognize peptide-major histocompatibility (MH) (pMH) complexes that are displayed by antigen presenting cells (APC), a prerequisite for efficient T cell adaptive immunity against pathogens. Binding of alpha-beta TR to pMH complex initiates TR-CD3 clustering on the cell surface and intracellular activation of LCK that phosphorylates the ITAM motifs of CD3G, CD3D, CD3E and CD247 enabling the recruitment of ZAP70. In turn ZAP70 phosphorylates LAT, which recruits numerous signaling molecules to form the LAT signalosome. The LAT signalosome propagates signal branching to three major signaling pathways, the calcium, the mitogen-activated protein kinase (MAPK) kinase and the nuclear factor NF-kappa-B (NF-kB) pathways, leading to the mobilization of transcription factors that are critical for gene expression and essential for T cell growth and differentiation. The T cell repertoire is generated in the thymus, by V-(D)-J rearrangement. This repertoire is then shaped by intrathymic selection events to generate a peripheral T cell pool of self-MH restricted, non-autoaggressive T cells. Post-thymic interaction of alpha-beta TR with the pMH complexes shapes TR structural and functional avidity. The polypeptide is T cell receptor alpha variable 1-1 (Homo sapiens (Human)).